A 354-amino-acid polypeptide reads, in one-letter code: Uroporphyrinogen decarboxylase (354 aa).

Substrate-binding positions include 27–31, Asp-77, Tyr-154, Thr-209, and His-327; that span reads RQAGR.

Belongs to the uroporphyrinogen decarboxylase family. Homodimer.

It is found in the cytoplasm. It carries out the reaction uroporphyrinogen III + 4 H(+) = coproporphyrinogen III + 4 CO2. It functions in the pathway porphyrin-containing compound metabolism; protoporphyrin-IX biosynthesis; coproporphyrinogen-III from 5-aminolevulinate: step 4/4. Functionally, catalyzes the decarboxylation of four acetate groups of uroporphyrinogen-III to yield coproporphyrinogen-III. This Salmonella arizonae (strain ATCC BAA-731 / CDC346-86 / RSK2980) protein is Uroporphyrinogen decarboxylase.